Here is a 268-residue protein sequence, read N- to C-terminus: Tryptophan synthase alpha chain (268 aa).

Catalysis depends on proton acceptor residues Glu49 and Asp60.

This sequence belongs to the TrpA family. Tetramer of two alpha and two beta chains.

The catalysed reaction is (1S,2R)-1-C-(indol-3-yl)glycerol 3-phosphate + L-serine = D-glyceraldehyde 3-phosphate + L-tryptophan + H2O. It participates in amino-acid biosynthesis; L-tryptophan biosynthesis; L-tryptophan from chorismate: step 5/5. Its function is as follows. The alpha subunit is responsible for the aldol cleavage of indoleglycerol phosphate to indole and glyceraldehyde 3-phosphate. In Salmonella paratyphi A (strain ATCC 9150 / SARB42), this protein is Tryptophan synthase alpha chain.